The sequence spans 1574 residues: Sterol 3-beta-glucosyltransferase (1574 aa).

The segment covering Thr37–Asn48 has biased composition (polar residues). 2 disordered regions span residues Thr37 to Glu61 and Ala102 to Leu170. Composition is skewed to basic and acidic residues over residues Glu107 to Arg121 and Pro128 to Tyr138. Residues Asp139 to Ile148 show a composition bias toward acidic residues. Over residues Glu149–Leu170 the composition is skewed to basic and acidic residues. A GRAM 1 domain is found at Asp253 to Thr288. The PH domain occupies Asp323 to Phe471. Disordered stretches follow at residues Gly389–Glu413, Arg538–Pro559, Ala651–Gly722, and Asp774–Asn806. A compositionally biased stretch (polar residues) spans Ile692 to Lys701. Residues Ser702 to Pro711 are compositionally biased toward basic and acidic residues. Residues Asp712–Gly722 show a composition bias toward polar residues. A GRAM 2 domain is found at Arg854–Lys920. Over residues Arg964 to Ser976 the composition is skewed to basic and acidic residues. The segment at Arg964–Lys996 is disordered. Residues Phe985–Lys996 show a composition bias toward polar residues. UDP-alpha-D-glucose contacts are provided by Ser1057, Arg1058, Asp1060, Asn1333, Ile1364, His1366, His1379, Ser1382, Gly1383, Thr1384, Asp1403, and Gln1404. The tract at residues Asp1505–Lys1574 is disordered. A compositionally biased stretch (basic and acidic residues) spans Asp1510–Tyr1533. Residues Gly1563–Lys1574 show a composition bias toward polar residues.

This sequence belongs to the glycosyltransferase 28 family.

It localises to the cytoplasm. The protein resides in the membrane. The catalysed reaction is a sterol + UDP-alpha-D-glucose = a sterol 3-beta-D-glucoside + UDP + H(+). It catalyses the reaction ergosterol + UDP-alpha-D-glucose = ergosteryl 3-beta-D-glucoside + UDP + H(+). In terms of biological role, sterol glycosyltransferase responsible for the glycosylation of ergosterol to form ergosterol-glucoside. This chain is Sterol 3-beta-glucosyltransferase, found in Debaryomyces hansenii (strain ATCC 36239 / CBS 767 / BCRC 21394 / JCM 1990 / NBRC 0083 / IGC 2968) (Yeast).